Reading from the N-terminus, the 1269-residue chain is MVAVMQTDMGETENSAVRPKVTDAKGILKQNRQFLDYFWDIAKPDRQIRLKAIEDLINYLKNSEQADELKYTLKRLVDGLSHTREDARSGYSVALAQLLSVFEEISLKSTLNSVKEKHNLLTASKKLIRNAVFGNFFGVLALSQSTRLHKEPQVMLECVQLLQSLSEYREHLRDLPRKTMVDILSETSQDVFEEVLFSALQSDLTSALKSPEQLELLLVALQKFPSVLKPKKLKKLLGTTAVITKQNMPRLVEVLKTAARSVKKENILPAVALDLLQVSLREDNFEMFWTDAIITGMMSEMPGPTHYLSFRLLGASLPLLSIPQLQFVLSGDVMRQYGEHTMSAQMPDRFKFAPEMAGYVGEFMQSCTDPDKQLVVVLGFTQLTNQGNPVVPSYWKALENMHPSAVQRYVDWLIEAFCKPQLENCLDFSTRRQKGNQEAAVESESCVSRFRKWIIPRLTFIVENQQIKKQEALVMKVVRFIFFHAFFEVKKPTSEIPETTQALSVPINQQTRTAVVSGFYSLLQALNSMMVLGESVEVQGLNFRRIVGVQADGSMWIYSVFQFASMLLNQNKYVKSLQSFSPEQRQGWDSVLESVEALRKKAKTASSPEHTAFQQLFLLIGIQMFTSPEESLDLLKDLQTCMEKAQAKKSKKKKATDEPHWVEVIVEILLSLVSQPSRLVRSVCKTVFGRICPHLTQAALSSILNVLDPNKDEDESGVVVTDDKKRKLKEEDEDDDDEEEDDDNDEGDDDDDDDDEEEGGEEGEESSDSSDDEEEDEAMEEGQEVDQNFRLELMKVLQGQNALATEEDGSDDEELDDAAMMKLDGSLASLFLEQRKKIQAKKDEKDRLNKEKGLVRDFKIKVLDMVEVFLSKQGFSPLVLGMVEPLLSVIENGMSSESSQPEQDYLRRVADIFRNRLCRGKFYCKEIDGREAELHEMLERLIGRAQKLTDSSVALYYFSAALYVLKVLRGSVVDQELSTMGKVEVERATTCLKNALTSFMTKRKSPLTGAMFIDLFHRFPVLCVNLMDTALENITAGLRDHQQGQACFIMLKALQCKHVKNLMTGEQTTELYKKVVDQLTKSLENVQCKNKTAHDKVVKALELCLHVVKIVLNQKMRVNLELLQDVLASMNAEGCLEKTGKLEDTYWSVMRLFGVIKPKMEKVKKVPEAEQTEETTKKKKGFLPETKKRKNRKKPTILEGKETETPVEKTPEGASGEGKKNKNKKKNKKRKQQAGEETQDQPTPKKAKMQQQQQQKQKKKKKKKGADGE.

The disordered stretch occupies residues 708 to 783 (DPNKDEDESG…EEDEAMEEGQ (76 aa)). Positions 721–730 (TDDKKRKLKE) are enriched in basic and acidic residues. The segment covering 731–783 (EDEDDDDEEEDDDNDEGDDDDDDDDEEEGGEEGEESSDSSDDEEEDEAMEEGQ) has biased composition (acidic residues). Residue serine 810 is modified to Phosphoserine. The interval 1163 to 1269 (VKKVPEAEQT…KKKKKGADGE (107 aa)) is disordered. The segment covering 1177–1195 (KKKKGFLPETKKRKNRKKP) has biased composition (basic residues). Basic and acidic residues predominate over residues 1199–1211 (EGKETETPVEKTP). 2 stretches are compositionally biased toward basic residues: residues 1221-1232 (NKNKKKNKKRKQ) and 1256-1269 (KQKKKKKKKGADGE).

It belongs to the MYBBP1A family.

The protein localises to the nucleus. Its subcellular location is the nucleolus. In terms of biological role, may activate or repress transcription via interactions with sequence specific DNA-binding proteins. May play a role in the repression of the circadian clock gene expression. This Danio rerio (Zebrafish) protein is Myb-binding protein 1A-like protein (mybbp1a).